Consider the following 92-residue polypeptide: MARVTVEDAVEQIGNRFDMILVAARRARQIAVQGKDPMVEEMNDKPTVIALREIELGLVNAHTLDADERQTVREREAAEIAAVAAIAEGRSL.

This sequence belongs to the RNA polymerase subunit omega family. In terms of assembly, the RNAP catalytic core consists of 2 alpha, 1 beta, 1 beta' and 1 omega subunit. When a sigma factor is associated with the core the holoenzyme is formed, which can initiate transcription.

The catalysed reaction is RNA(n) + a ribonucleoside 5'-triphosphate = RNA(n+1) + diphosphate. Promotes RNA polymerase assembly. Latches the N- and C-terminal regions of the beta' subunit thereby facilitating its interaction with the beta and alpha subunits. This Shewanella oneidensis (strain ATCC 700550 / JCM 31522 / CIP 106686 / LMG 19005 / NCIMB 14063 / MR-1) protein is DNA-directed RNA polymerase subunit omega.